The following is a 186-amino-acid chain: Heat shock protein 23 (186 aa).

A sHSP domain is found at 53 to 161 (VGASSGSSGA…KGNERIVQIQ (109 aa)). Residues 163 to 186 (VGPAHLNVKENPKEAVEQDNGNDK) form a disordered region. The span at 169–186 (NVKENPKEAVEQDNGNDK) shows a compositional bias: basic and acidic residues.

It belongs to the small heat shock protein (HSP20) family.

This chain is Heat shock protein 23 (Hsp23), found in Drosophila melanogaster (Fruit fly).